Reading from the N-terminus, the 159-residue chain is Ribosomal RNA large subunit methyltransferase H (159 aa).

Residues leucine 76, glycine 108, and 127–132 (FSKMTF) contribute to the S-adenosyl-L-methionine site.

This sequence belongs to the RNA methyltransferase RlmH family. In terms of assembly, homodimer.

It localises to the cytoplasm. The enzyme catalyses pseudouridine(1915) in 23S rRNA + S-adenosyl-L-methionine = N(3)-methylpseudouridine(1915) in 23S rRNA + S-adenosyl-L-homocysteine + H(+). Specifically methylates the pseudouridine at position 1915 (m3Psi1915) in 23S rRNA. The protein is Ribosomal RNA large subunit methyltransferase H of Exiguobacterium sp. (strain ATCC BAA-1283 / AT1b).